A 1314-amino-acid polypeptide reads, in one-letter code: Ubinuclein-2 (1314 aa).

The interval 1–113 (MAEPRRVAFI…PPPRPPKETV (113 aa)) is disordered. S13 is subject to Phosphoserine. 2 stretches are compositionally biased toward basic and acidic residues: residues 16–31 (RRREADFAGAEREPPR) and 55–67 (ARDKPLPQREVSR). The segment covering 81–96 (PEPPPPPLPLQTPPPR) has biased composition (pro residues). At T229 the chain carries Phosphothreonine. S236 carries the post-translational modification Phosphoserine. Residues 236–288 (SDTEEDDFTDNQKHKPPKVPKIKEDDIEVKKRKRKEEGEKEKKPRKKVPKQLG) are disordered. At T238 the chain carries Phosphothreonine. K258 is covalently cross-linked (Glycyl lysine isopeptide (Lys-Gly) (interchain with G-Cter in SUMO2)). S297 is modified (phosphoserine). Disordered regions lie at residues 322–345 (DALKKESTPKVPVTPSSSSLPKPP), 400–424 (ATSDGSPLSESGGENGNTTHPTFPS), 559–584 (LQADEEREKNGSDDDDDEKPGKRVIG), 657–709 (LTSA…ASAS), 785–818 (ATPKKLDSTQTAHSSSLIAGHTGPVPKKPQDLAH), 849–893 (GLQR…SLTQ), 948–975 (YRLPLSTPSPGNGSQGPHPLVSRTAPST), 1003–1185 (ASPK…GSSV), and 1288–1314 (PLPAHLQQAFNDGGQSKGDTKLPRKPQ). Residues 330–341 (PKVPVTPSSSSL) are compositionally biased toward low complexity. S402, S405, and S408 each carry phosphoserine. Residues 415-424 (GNTTHPTFPS) show a composition bias toward polar residues. 2 stretches are compositionally biased toward basic and acidic residues: residues 560 to 570 (QADEEREKNGS) and 673 to 684 (KVKECSPKKDPK). A Phosphoserine modification is found at S570. The span at 685-709 (APASVVASGGGPSTSSSTSIVASAS) shows a compositional bias: low complexity. The segment covering 792–801 (STQTAHSSSL) has biased composition (polar residues). Over residues 849-879 (GLQRSSQIHASSSSQTHVSSSQAQAAASSHA) the composition is skewed to low complexity. Over residues 883–893 (SEAQDASSLTQ) the composition is skewed to polar residues. Residues 1003–1013 (ASPKLAASPKP) are compositionally biased toward low complexity. Over residues 1014–1028 (ATSPKPLPSPKPSVS) the composition is skewed to pro residues. Residues 1029-1040 (PKPSLSAKPSIS) are compositionally biased toward low complexity. Residue K1036 is modified to N6-acetyllysine. Polar residues-rich tracts occupy residues 1057–1132 (PSSS…NSLS) and 1142–1153 (RGSNLNSSGANR). S1091 carries the post-translational modification Phosphoserine. At K1116 the chain carries N6-acetyllysine. Residues 1305-1314 (GDTKLPRKPQ) are compositionally biased toward basic and acidic residues.

This sequence belongs to the ubinuclein family.

The sequence is that of Ubinuclein-2 (Ubn2) from Mus musculus (Mouse).